The primary structure comprises 475 residues: Lactate utilization protein B (475 aa).

4Fe-4S ferredoxin-type domains are found at residues 304-334 and 353-382; these read GTEF…GHSY and YDDY…LHEL. Residues Cys-313, Cys-316, Cys-319, Cys-323, Cys-366, Cys-369, and Cys-373 each contribute to the [4Fe-4S] cluster site.

It belongs to the LutB/YkgF family.

In terms of biological role, is involved in L-lactate degradation and allows cells to grow with lactate as the sole carbon source. Has probably a role as an electron transporter during oxidation of L-lactate. In Geobacillus sp. (strain WCH70), this protein is Lactate utilization protein B.